Consider the following 265-residue polypeptide: Homeobox protein Nkx-6.3 (265 aa).

The segment at residues 139 to 198 (KKHTRPTFTGHQIFALEKTFEQTKYLAGPERARLAYSLGMTESQVKVWFQNRRTKWRKKS) is a DNA-binding region (homeobox). Positions 196 to 240 (KKSALEPSSSTPRAPGGAGAGAGGDRAPSENEDDEYNKPLDPDSD) are disordered.

The protein localises to the nucleus. Functionally, putative transcription factor, which may be involved in patterning of central nervous system and pancreas. This Homo sapiens (Human) protein is Homeobox protein Nkx-6.3 (NKX6-3).